The sequence spans 511 residues: DEP domain-containing protein 7 (511 aa).

The 91-residue stretch at 46 to 136 folds into the DEP domain; the sequence is LQTQVEVKKR…SSCSLYRFTT (91 aa).

This sequence belongs to the DEPDC7 family.

This chain is DEP domain-containing protein 7 (Depdc7), found in Rattus norvegicus (Rat).